A 71-amino-acid polypeptide reads, in one-letter code: MHRKKRKKEKKRTEKDNTTNLPPLFLFPCSLSLPTLLAPVHYIPTRLTHHQAENQLFLLLFQPIIVKPLRS.

Positions Met1–Lys10 are enriched in basic residues. The tract at residues Met1–Asn20 is disordered. Residues Leu21–Ile43 traverse the membrane as a helical segment.

The protein localises to the membrane. This is an uncharacterized protein from Saccharomyces cerevisiae (strain ATCC 204508 / S288c) (Baker's yeast).